The primary structure comprises 407 residues: Proteasome-activating nucleotidase (407 aa).

Positions 22 to 67 (KEKTQIAELESKVLRLELKNKDISRENVQIKKENEILKRELDKLRI) form a coiled coil. ATP-binding positions include 192–197 (GTGKTL) and His331. A docks into pockets in the proteasome alpha-ring to cause gate opening region spans residues 405–407 (MYG).

This sequence belongs to the AAA ATPase family. As to quaternary structure, homohexamer. The hexameric complex has a two-ring architecture resembling a top hat that caps the 20S proteasome core at one or both ends. Upon ATP-binding, the C-terminus of PAN interacts with the alpha-rings of the proteasome core by binding to the intersubunit pockets.

The protein resides in the cytoplasm. In terms of biological role, ATPase which is responsible for recognizing, binding, unfolding and translocation of substrate proteins into the archaeal 20S proteasome core particle. Is essential for opening the gate of the 20S proteasome via an interaction with its C-terminus, thereby allowing substrate entry and access to the site of proteolysis. Thus, the C-termini of the proteasomal ATPase function like a 'key in a lock' to induce gate opening and therefore regulate proteolysis. Unfolding activity requires energy from ATP hydrolysis, whereas ATP binding alone promotes ATPase-20S proteasome association which triggers gate opening, and supports translocation of unfolded substrates. This chain is Proteasome-activating nucleotidase, found in Methanococcus maripaludis (strain C6 / ATCC BAA-1332).